We begin with the raw amino-acid sequence, 251 residues long: Malonyl-[acyl-carrier protein] O-methyltransferase (251 aa).

This sequence belongs to the methyltransferase superfamily.

It carries out the reaction malonyl-[ACP] + S-adenosyl-L-methionine = malonyl-[ACP] methyl ester + S-adenosyl-L-homocysteine. The protein operates within cofactor biosynthesis; biotin biosynthesis. In terms of biological role, converts the free carboxyl group of a malonyl-thioester to its methyl ester by transfer of a methyl group from S-adenosyl-L-methionine (SAM). It allows to synthesize pimeloyl-ACP via the fatty acid synthetic pathway. The polypeptide is Malonyl-[acyl-carrier protein] O-methyltransferase (Salmonella typhimurium (strain LT2 / SGSC1412 / ATCC 700720)).